The following is a 1198-amino-acid chain: Rac guanine nucleotide exchange factor B (1198 aa).

The interval 1 to 104 is disordered; the sequence is MFSNFFGSSK…QHQGVITSLQ (104 aa). A compositionally biased stretch (low complexity) spans 8–20; that stretch reads SSKRNTIASSSSS. Residues 21 to 34 show a composition bias toward basic and acidic residues; it reads SKKDKDNGKDESSK. Residues 35–58 show a composition bias toward polar residues; sequence LKNSGSSTLPKPITNNESGNNFIT. The span at 59–97 shows a compositional bias: low complexity; it reads SPSVSSPLISPLSSSPSPLLSSSSNSIQSTSHQQQQQHQ. Residues 126-232 enclose the Calponin-homology (CH) 1 domain; the sequence is SSLEQTARKW…NIVVLGKHAS (107 aa). The tract at residues 260–284 is disordered; that stretch reads FGGNHNNNNNNNNNNNTSNGDLSPV. Positions 263 to 275 are enriched in low complexity; sequence NHNNNNNNNNNNN. Calponin-homology (CH) domains lie at 341–449 and 511–619; these read PELQ…NKMY and PEDM…ENFD. A DH domain is found at 632 to 846; sequence RRQKVIEEII…KRVADHVNES (215 aa). The 151-residue stretch at 876–1026 folds into the PH domain; sequence TYIREGFLEI…WMEDLRSCLQ (151 aa). The span at 940–952 shows a compositional bias: acidic residues; sequence GEACVDGDDDGGE. 2 disordered regions span residues 940–989 and 1076–1198; these read GEAC…SNKS and NNNN…IDNQ. Composition is skewed to low complexity over residues 977–989 and 1076–1118; these read NSNNNNNSNSNKS and NNNN…NNND. Over residues 1155-1167 the composition is skewed to acidic residues; that stretch reads DETISDTESDDYE. Residues 1188–1198 are compositionally biased toward polar residues; that stretch reads FSDTIKNIDNQ.

Binds to F-actin.

Its subcellular location is the late endosome. In terms of biological role, involved in the regulation of the late steps of the endocytic pathway. The chain is Rac guanine nucleotide exchange factor B (gxcB) from Dictyostelium discoideum (Social amoeba).